The sequence spans 207 residues: Ribosomal RNA small subunit methyltransferase G (207 aa).

S-adenosyl-L-methionine-binding positions include Gly76, Gln81, 127–128 (VE), and Arg141.

This sequence belongs to the methyltransferase superfamily. RNA methyltransferase RsmG family.

The protein localises to the cytoplasm. It carries out the reaction guanosine(527) in 16S rRNA + S-adenosyl-L-methionine = N(7)-methylguanosine(527) in 16S rRNA + S-adenosyl-L-homocysteine. Its function is as follows. Specifically methylates the N7 position of guanine in position 527 of 16S rRNA. This Neisseria gonorrhoeae (strain ATCC 700825 / FA 1090) protein is Ribosomal RNA small subunit methyltransferase G.